The sequence spans 108 residues: Large ribosomal subunit protein uL22 (108 aa).

This sequence belongs to the universal ribosomal protein uL22 family. Part of the 50S ribosomal subunit.

Its function is as follows. This protein binds specifically to 23S rRNA; its binding is stimulated by other ribosomal proteins, e.g. L4, L17, and L20. It is important during the early stages of 50S assembly. It makes multiple contacts with different domains of the 23S rRNA in the assembled 50S subunit and ribosome. Functionally, the globular domain of the protein is located near the polypeptide exit tunnel on the outside of the subunit, while an extended beta-hairpin is found that lines the wall of the exit tunnel in the center of the 70S ribosome. In Desulfatibacillum aliphaticivorans, this protein is Large ribosomal subunit protein uL22.